The chain runs to 367 residues: tRNA-specific 2-thiouridylase MnmA (367 aa).

ATP is bound by residues 10–17 and methionine 36; that span reads AMSGGVDS. The active-site Nucleophile is cysteine 106. An intrachain disulfide couples cysteine 106 to cysteine 204. An ATP-binding site is contributed by glycine 130. An interaction with tRNA region spans residues 154-156; it reads KDQ. The active-site Cysteine persulfide intermediate is cysteine 204. The tract at residues 310–311 is interaction with tRNA; that stretch reads RY.

It belongs to the MnmA/TRMU family.

It localises to the cytoplasm. It catalyses the reaction S-sulfanyl-L-cysteinyl-[protein] + uridine(34) in tRNA + AH2 + ATP = 2-thiouridine(34) in tRNA + L-cysteinyl-[protein] + A + AMP + diphosphate + H(+). Its function is as follows. Catalyzes the 2-thiolation of uridine at the wobble position (U34) of tRNA, leading to the formation of s(2)U34. This Desulforamulus reducens (strain ATCC BAA-1160 / DSM 100696 / MI-1) (Desulfotomaculum reducens) protein is tRNA-specific 2-thiouridylase MnmA.